A 356-amino-acid polypeptide reads, in one-letter code: Tyrosine recombinase XerS (356 aa).

Residues 16-121 (IMPWYVLDYY…ALSSLYKYLT (106 aa)) form the Core-binding (CB) domain. The Tyr recombinase domain occupies 169–354 (AFLDYVDKEY…VNDEQKNALD (186 aa)). Catalysis depends on residues R210, K234, H306, R309, and H332. Y341 serves as the catalytic O-(3'-phospho-DNA)-tyrosine intermediate.

Belongs to the 'phage' integrase family. XerS subfamily.

Its subcellular location is the cytoplasm. FtsK is required for recombination. Site-specific tyrosine recombinase, which acts by catalyzing the cutting and rejoining of the recombining DNA molecules. Essential to convert dimers of the bacterial chromosome into monomers to permit their segregation at cell division. The sequence is that of Tyrosine recombinase XerS from Streptococcus pyogenes serotype M49 (strain NZ131).